Here is a 338-residue protein sequence, read N- to C-terminus: Lipoate-protein ligase A (338 aa).

One can recognise a BPL/LPL catalytic domain in the interval Pro29–Val216. Residues Arg71, Gly76 to Phe79, and Lys134 each bind ATP. Lys134 is a binding site for (R)-lipoate.

It belongs to the LplA family. In terms of assembly, monomer.

Its subcellular location is the cytoplasm. The catalysed reaction is L-lysyl-[lipoyl-carrier protein] + (R)-lipoate + ATP = N(6)-[(R)-lipoyl]-L-lysyl-[lipoyl-carrier protein] + AMP + diphosphate + H(+). It participates in protein modification; protein lipoylation via exogenous pathway; protein N(6)-(lipoyl)lysine from lipoate: step 1/2. The protein operates within protein modification; protein lipoylation via exogenous pathway; protein N(6)-(lipoyl)lysine from lipoate: step 2/2. Functionally, catalyzes both the ATP-dependent activation of exogenously supplied lipoate to lipoyl-AMP and the transfer of the activated lipoyl onto the lipoyl domains of lipoate-dependent enzymes. The sequence is that of Lipoate-protein ligase A from Klebsiella pneumoniae (strain 342).